A 174-amino-acid polypeptide reads, in one-letter code: ATP-dependent protease subunit HslV (174 aa).

Thr-2 is an active-site residue. Residues Gly-157, Cys-160, and Thr-163 each contribute to the Na(+) site.

This sequence belongs to the peptidase T1B family. HslV subfamily. A double ring-shaped homohexamer of HslV is capped on each side by a ring-shaped HslU homohexamer. The assembly of the HslU/HslV complex is dependent on binding of ATP.

It is found in the cytoplasm. It carries out the reaction ATP-dependent cleavage of peptide bonds with broad specificity.. Its activity is regulated as follows. Allosterically activated by HslU binding. In terms of biological role, protease subunit of a proteasome-like degradation complex believed to be a general protein degrading machinery. The chain is ATP-dependent protease subunit HslV from Shewanella denitrificans (strain OS217 / ATCC BAA-1090 / DSM 15013).